A 368-amino-acid polypeptide reads, in one-letter code: Histidinol-phosphate aminotransferase (368 aa).

At K215 the chain carries N6-(pyridoxal phosphate)lysine.

It belongs to the class-II pyridoxal-phosphate-dependent aminotransferase family. Histidinol-phosphate aminotransferase subfamily. As to quaternary structure, homodimer. Requires pyridoxal 5'-phosphate as cofactor.

It catalyses the reaction L-histidinol phosphate + 2-oxoglutarate = 3-(imidazol-4-yl)-2-oxopropyl phosphate + L-glutamate. It functions in the pathway amino-acid biosynthesis; L-histidine biosynthesis; L-histidine from 5-phospho-alpha-D-ribose 1-diphosphate: step 7/9. This Buchnera aphidicola subsp. Acyrthosiphon pisum (strain APS) (Acyrthosiphon pisum symbiotic bacterium) protein is Histidinol-phosphate aminotransferase (hisC).